Reading from the N-terminus, the 187-residue chain is Protein GrpE (187 aa).

Residues 1-30 are disordered; the sequence is MEKKETKSESEKTNKQDNKNTKSQKKENLN.

The protein belongs to the GrpE family. In terms of assembly, homodimer.

The protein localises to the cytoplasm. Participates actively in the response to hyperosmotic and heat shock by preventing the aggregation of stress-denatured proteins, in association with DnaK and GrpE. It is the nucleotide exchange factor for DnaK and may function as a thermosensor. Unfolded proteins bind initially to DnaJ; upon interaction with the DnaJ-bound protein, DnaK hydrolyzes its bound ATP, resulting in the formation of a stable complex. GrpE releases ADP from DnaK; ATP binding to DnaK triggers the release of the substrate protein, thus completing the reaction cycle. Several rounds of ATP-dependent interactions between DnaJ, DnaK and GrpE are required for fully efficient folding. The polypeptide is Protein GrpE (Borreliella burgdorferi (strain ATCC 35210 / DSM 4680 / CIP 102532 / B31) (Borrelia burgdorferi)).